The sequence spans 227 residues: Ribonuclease 3 (227 aa).

Residues Phe4–Asn133 enclose the RNase III domain. Glu46 lines the Mg(2+) pocket. Asp50 is a catalytic residue. Mg(2+) is bound by residues Asn119 and Glu122. Glu122 is an active-site residue. The 69-residue stretch at Asp158–Asp226 folds into the DRBM domain.

Belongs to the ribonuclease III family. In terms of assembly, homodimer. Mg(2+) is required as a cofactor.

The protein localises to the cytoplasm. The enzyme catalyses Endonucleolytic cleavage to 5'-phosphomonoester.. Digests double-stranded RNA. Involved in the processing of primary rRNA transcript to yield the immediate precursors to the large and small rRNAs (23S and 16S). Processes some mRNAs, and tRNAs when they are encoded in the rRNA operon. Processes pre-crRNA and tracrRNA of type II CRISPR loci if present in the organism. The chain is Ribonuclease 3 from Rickettsia akari (strain Hartford).